The primary structure comprises 235 residues: Urease accessory protein UreF (235 aa).

This sequence belongs to the UreF family. In terms of assembly, ureD, UreF and UreG form a complex that acts as a GTP-hydrolysis-dependent molecular chaperone, activating the urease apoprotein by helping to assemble the nickel containing metallocenter of UreC. The UreE protein probably delivers the nickel.

It is found in the cytoplasm. In terms of biological role, required for maturation of urease via the functional incorporation of the urease nickel metallocenter. The sequence is that of Urease accessory protein UreF from Haemophilus influenzae (strain ATCC 51907 / DSM 11121 / KW20 / Rd).